The chain runs to 793 residues: Protein zer-1 homolog (793 aa).

3 LRR repeats span residues 84-108, 187-210, and 269-294; these read RTSL…LMRH, LHDL…ALGS, and LRHL…ESTT.

Belongs to the zyg-11 family.

Functionally, serves as substrate adapter subunit in an E3 ubiquitin ligase complex CG12084-cul-2-elongin BC. Targets substrates bearing N-terminal glycine degrons for proteasomal degradation. This is Protein zer-1 homolog from Drosophila melanogaster (Fruit fly).